Consider the following 389-residue polypeptide: Leucine aminopeptidase 1 (389 aa).

The first 19 residues, 1 to 19 (MKLPALLTLGVAASTMVLA), serve as a signal peptide directing secretion. Positions 20–88 (AIAPDQVPLN…LPKVFPTPAV (69 aa)) are excised as a propeptide. N96, N119, N149, N164, and N181 each carry an N-linked (GlcNAc...) asparagine glycan. The Zn(2+) site is built by H189 and D208. N233 carries an N-linked (GlcNAc...) asparagine glycan. Residues E247 and D274 each coordinate Zn(2+). C323 and C327 are disulfide-bonded. A Zn(2+)-binding site is contributed by H356.

The protein belongs to the peptidase M28 family. M28E subfamily. In terms of assembly, monomer. Requires Zn(2+) as cofactor.

The protein localises to the secreted. Functionally, extracellular aminopeptidase that allows assimilation of proteinaceous substrates. The polypeptide is Leucine aminopeptidase 1 (LAP1) (Paracoccidioides brasiliensis (strain Pb18)).